The primary structure comprises 1145 residues: Probable ATP-dependent RNA helicase DHX34 (1145 aa).

Over residues 1–14 the composition is skewed to basic and acidic residues; sequence MPPPRTREGRGHRD. Residues 1–27 are disordered; the sequence is MPPPRTREGRGHRDRDHHRAPREEEAP. The region spanning 174 to 334 is the Helicase ATP-binding domain; the sequence is LQTLKEHQVV…FSHAPVVQVP (161 aa). Position 187 to 194 (187 to 194) interacts with ATP; it reads GDTGCGKS. Positions 281–284 match the DEAH box motif; the sequence is DEVH. In terms of domain architecture, Helicase C-terminal spans 370–538; that stretch reads AIDNKYPPEE…ALVLQMKSMS (169 aa). 2 disordered regions span residues 726–764 and 1091–1114; these read LKRQ…QRAD and NTCP…PQKT. Residues Ser-749 and Ser-750 each carry the phosphoserine modification.

Belongs to the DEAD box helicase family. DEAH subfamily. Forms a complex with RUVBL1 and RUVBL2. Part of a complex composed of SMG1, DHX34 and UPF1; within the complex DHX34 acts as a scaffolding protein to facilitate SMG1 phosphorylation of UPF1. Interacts with UPF1, MOV10, EIF4A3, XRN2, SMG6, SMG7, SMG9, UPF3A, UPF3B, CASC3/MLN51, XRN1, DIS3 and DCP1A; the interactions are RNA-independent. Interacts with NCBP1/CPB80; the interaction is RNA-dependent. Interacts (via C-terminus) with SMG1; the interaction is RNA-independent.

The catalysed reaction is ATP + H2O = ADP + phosphate + H(+). Probable ATP-binding RNA helicase. Required for nonsense-mediated decay (NMD) degradation of mRNA transcripts containing premature stop codons. Promotes the phosphorylation of UPF1 along with its interaction with key NMD pathway proteins UPF2 and EIF4A3. Negatively regulates the nucleotide binding ability and ATP hydrolysis of the RUVBL1-RUVBL2 complex via induction of N-terminus conformation changes of the RUVBL2 subunits. The chain is Probable ATP-dependent RNA helicase DHX34 from Mus musculus (Mouse).